Here is a 98-residue protein sequence, read N- to C-terminus: MVLIKLNIIVAFMLALSGVLIYRSHLMSTLLCLEGMMLSLFIFMAAMITHFHMFSISMMPLILLVFSACEAGVGLALLVSISNTYGNDQVQNLNLLQC.

3 consecutive transmembrane segments (helical) span residues 1 to 21 (MVLI…GVLI), 36 to 56 (MMLS…MFSI), and 61 to 81 (LILL…LVSI).

Belongs to the complex I subunit 4L family.

It localises to the mitochondrion membrane. The enzyme catalyses a ubiquinone + NADH + 5 H(+)(in) = a ubiquinol + NAD(+) + 4 H(+)(out). Its function is as follows. Core subunit of the mitochondrial membrane respiratory chain NADH dehydrogenase (Complex I) which catalyzes electron transfer from NADH through the respiratory chain, using ubiquinone as an electron acceptor. Part of the enzyme membrane arm which is embedded in the lipid bilayer and involved in proton translocation. The protein is NADH-ubiquinone oxidoreductase chain 4L (MT-ND4L) of Didelphis virginiana (North American opossum).